An 84-amino-acid chain; its full sequence is Large ribosomal subunit protein bL27 (84 aa).

The disordered stretch occupies residues Met1–Leu21. Residues Ala7 to Gln19 show a composition bias toward polar residues.

The protein belongs to the bacterial ribosomal protein bL27 family.

This Clavibacter michiganensis subsp. michiganensis (strain NCPPB 382) protein is Large ribosomal subunit protein bL27.